Reading from the N-terminus, the 227-residue chain is Mitochondrial inner membrane protease ATP23 (227 aa).

An a divalent metal cation-binding site is contributed by His-124. Glu-125 is an active-site residue. Residue His-128 participates in a divalent metal cation binding.

It belongs to the peptidase M76 family. In terms of assembly, interacts with ATP6.

The protein localises to the mitochondrion inner membrane. Functionally, has a dual role in the assembly of mitochondrial ATPase. Acts as a protease that removes the N-terminal 10 residues of mitochondrial ATPase CF(0) subunit 6 (ATP6) at the intermembrane space side. Also involved in the correct assembly of the membrane-embedded ATPase CF(0) particle, probably mediating association of ATP6 with the subunit 9 ring. This Saccharomyces cerevisiae (strain YJM789) (Baker's yeast) protein is Mitochondrial inner membrane protease ATP23 (ATP23).